The following is a 341-amino-acid chain: NADH-ubiquinone oxidoreductase chain 2 (341 aa).

9 helical membrane-spanning segments follow: residues 8–28 (IFLIMLIFGTLVTISSNSWLG), 61–81 (FLTQAFASSILLFAIIMLMFL), 95–115 (ILILSTLLLKSGAAPFHFWFP), 145–165 (FIYNFFMISIILSMLIGSLGG), 174–191 (LMAFSSINHLGWMLLAMM), 195–215 (MLWMTYFLMYSLLSFSIVLMF), 238–258 (LLIFLNLLSLGGLPPFLGFLP), 272–292 (LFILTISVCLTLITLYFYLRL), and 321–341 (LIFNFISIGGLVMISMIYIIM).

It belongs to the complex I subunit 2 family.

It is found in the mitochondrion inner membrane. It catalyses the reaction a ubiquinone + NADH + 5 H(+)(in) = a ubiquinol + NAD(+) + 4 H(+)(out). In terms of biological role, core subunit of the mitochondrial membrane respiratory chain NADH dehydrogenase (Complex I) that is believed to belong to the minimal assembly required for catalysis. Complex I functions in the transfer of electrons from NADH to the respiratory chain. The immediate electron acceptor for the enzyme is believed to be ubiquinone. This is NADH-ubiquinone oxidoreductase chain 2 (mt:ND2) from Anopheles gambiae (African malaria mosquito).